The following is a 252-amino-acid chain: Triosephosphate isomerase (252 aa).

10–12 (NWK) is a binding site for substrate. Residue H96 is the Electrophile of the active site. The active-site Proton acceptor is E168. Substrate-binding positions include G174, S214, and 235-236 (GG).

This sequence belongs to the triosephosphate isomerase family. In terms of assembly, homodimer.

The protein localises to the cytoplasm. The catalysed reaction is D-glyceraldehyde 3-phosphate = dihydroxyacetone phosphate. The protein operates within carbohydrate biosynthesis; gluconeogenesis. Its pathway is carbohydrate degradation; glycolysis; D-glyceraldehyde 3-phosphate from glycerone phosphate: step 1/1. Its function is as follows. Involved in the gluconeogenesis. Catalyzes stereospecifically the conversion of dihydroxyacetone phosphate (DHAP) to D-glyceraldehyde-3-phosphate (G3P). The chain is Triosephosphate isomerase from Streptococcus pyogenes serotype M18 (strain MGAS8232).